The sequence spans 179 residues: ADP-ribosylation factor 1-like 1 (179 aa).

Gly2 is lipidated: N-myristoyl glycine. The important for the stable binding to the membranes stretch occupies residues 3–16; the sequence is LFFSKISSFMFPNI. Residues 24 to 32, 126 to 129, and Ala160 each bind GTP; these read GLDGAGKTT and NKQD.

The protein belongs to the small GTPase superfamily. Arf family.

The protein localises to the golgi apparatus membrane. It catalyses the reaction GTP + H2O = GDP + phosphate + H(+). Alternates between an inactive GDP-bound form and an active GTP-bound form. Activated by a guanine nucleotide-exchange factor (GEF) and inactivated by GTPase-activating protein (GAP). Functionally, small GTPase involved in protein trafficking between different compartments. Modulates vesicle budding and uncoating within the Golgi complex. In its GTP-bound form, triggers the recruitment of coatomer proteins to the Golgi membrane. The hydrolysis of ARF1-bound GTP, which is mediated by ARFGAPs proteins, is required for dissociation of coat proteins from Golgi membranes and vesicles. The protein is ADP-ribosylation factor 1-like 1 (arf-1.1) of Caenorhabditis elegans.